The chain runs to 601 residues: Serine/threonine-protein phosphatase 2A 65 kDa regulatory subunit A beta isoform (601 aa).

At Ala2 the chain carries N-acetylalanine. HEAT repeat units lie at residues 20-58 (DSLY…GVER), 59-96 (TRTE…GGPD), 97-135 (FAHC…TPVA), 136-173 (LEAH…ASNA), 174-212 (VKAE…ELDS), 213-251 (VKTE…SQED), 252-290 (LEAL…GPKI), 291-333 (ALSD…RETV), 334-372 (IMNQ…GKEN), 373-411 (TIEH…GIRQ), 412-450 (LSQS…GVEF), 451-489 (FDEK…GTEW), 490-528 (AQNT…GKEI), 529-567 (TTKQ…DTNA), and 568-601 (LQGE…LALA).

The protein belongs to the phosphatase 2A regulatory subunit A family. PP2A consists of a common heterodimeric core enzyme, composed of a 36 kDa catalytic subunit (subunit C) and a 65 kDa constant regulatory subunit (PR65 or subunit A), that associates with a variety of regulatory subunits. Proteins that associate with the core dimer include three families of regulatory subunits B (the R2/B/PR55/B55, R3/B''/PR72/PR130/PR59 and R5/B'/B56 families), the 48 kDa variable regulatory subunit, viral proteins, and cell signaling molecules. Interacts with IPO9. Interacts with SGO1. Interacts with RAF1.

Its function is as follows. The PR65 subunit of protein phosphatase 2A serves as a scaffolding molecule to coordinate the assembly of the catalytic subunit and a variable regulatory B subunit. The sequence is that of Serine/threonine-protein phosphatase 2A 65 kDa regulatory subunit A beta isoform (Ppp2r1b) from Mus musculus (Mouse).